The primary structure comprises 520 residues: Cytochrome P450 72A68 (520 aa).

The helical transmembrane segment at 11–31 (IILITVTFGLVYAWRVLNWMW) threads the bilayer. Residue Cys-466 participates in heme binding.

This sequence belongs to the cytochrome P450 family. It depends on heme as a cofactor.

It is found in the membrane. It carries out the reaction oleanolate + 3 reduced [NADPH--hemoprotein reductase] + 3 O2 = gypsogenate + 3 oxidized [NADPH--hemoprotein reductase] + 4 H2O + 4 H(+). In terms of biological role, catalyzes the carboxylation of oleanolic acid at the C-23 position to form gypsogenic acid. Involved in the hemolytic saponin biosynthetic pathway. This chain is Cytochrome P450 72A68, found in Medicago truncatula (Barrel medic).